The following is a 632-amino-acid chain: Putative ankyrin repeat protein L767 (632 aa).

5 ANK repeats span residues 61–97 (YGNT…DYEF), 228–250 (FDNE…YIVE), 251–282 (KGFY…NLTD), 345–374 (NLDI…NVDD), and 517–546 (NSIE…NDTD).

The chain is Putative ankyrin repeat protein L767 from Acanthamoeba polyphaga mimivirus (APMV).